The following is a 228-amino-acid chain: Ephrin-A5 (228 aa).

The first 20 residues, 1 to 20 (MLHVEMLTLLFLVLWMCVFS), serve as a signal peptide directing secretion. The Ephrin RBD domain occupies 29 to 162 (ADRYAVYWNS…KLKVFVRPTN (134 aa)). Residue Asn-37 is glycosylated (N-linked (GlcNAc...) asparagine). Cystine bridges form between Cys-62-Cys-102 and Cys-90-Cys-151. A disordered region spans residues 186–205 (EPADDTVHESAEPSRGENAA). Over residues 190 to 200 (DTVHESAEPSR) the composition is skewed to basic and acidic residues. Asn-203 carries GPI-anchor amidated asparagine lipidation. Residues 204-228 (AAQTPRIPSRLLAILLFLLAMLLTL) constitute a propeptide, removed in mature form.

This sequence belongs to the ephrin family. In terms of assembly, binds to the receptor tyrosine kinases EPHA2, EPHA3, EPHB1 and EPHB2. Interacts with EPHA8; activates EPHA8. Forms a ternary EFNA5-EPHA3-ADAM10 complex mediating EFNA5 extracellular domain shedding by ADAM10 which regulates the EFNA5-EPHA3 complex internalization and function. In terms of tissue distribution, expressed in brain, heart, placenta and lung.

It localises to the cell membrane. Its subcellular location is the membrane. It is found in the caveola. Cell surface GPI-bound ligand for Eph receptors, a family of receptor tyrosine kinases which are crucial for migration, repulsion and adhesion during neuronal, vascular and epithelial development. Binds promiscuously Eph receptors residing on adjacent cells, leading to contact-dependent bidirectional signaling into neighboring cells. The signaling pathway downstream of the receptor is referred to as forward signaling while the signaling pathway downstream of the ephrin ligand is referred to as reverse signaling. Induces compartmentalized signaling within a caveolae-like membrane microdomain when bound to the extracellular domain of its cognate receptor. This signaling event requires the activity of the Fyn tyrosine kinase. Activates the EPHA3 receptor to regulate cell-cell adhesion and cytoskeletal organization. With the receptor EPHA2 may regulate lens fiber cells shape and interactions and be important for lens transparency maintenance. May function actively to stimulate axon fasciculation. The interaction of EFNA5 with EPHA5 also mediates communication between pancreatic islet cells to regulate glucose-stimulated insulin secretion. Cognate/functional ligand for EPHA7, their interaction regulates brain development modulating cell-cell adhesion and repulsion. This Rattus norvegicus (Rat) protein is Ephrin-A5 (Efna5).